The primary structure comprises 853 residues: MAPPLNSTTSNLIKTESIFDLSERKFKVKGFPLFHDVPENVSFRSFSSICKPSESNAPPSLLQKVLAYSHKGGFFGFSHETPSDRLMNSIGSFNGKDFLSIFRFKTWWSTQWIGKSGSDLQMETQWILIEVPETKSYVVIIPIIEKCFRSALFPGFNDHVKIIAESGSTKVKESTFNSIAYVHFSENPYDLMKEAYSAIRVHLNSFRLLEEKTIPNLVDKFGWCTWDAFYLTVNPIGIFHGLDDFSKGGVEPRFVIIDDGWQSISFDGYDPNEDAKNLVLGGEQMSGRLHRFDECYKFRKYESGLLLGPNSPPYDPNNFTDLILKGIEHEKLRKKREEAISSKSSDLAEIESKIKKVVKEIDDLFGGEQFSSGEKSEMKSEYGLKAFTKDLRTKFKGLDDVYVWHALCGAWGGVRPETTHLDTKIVPCKLSPGLDGTMEDLAVVEISKASLGLVHPSQANELYDSMHSYLAESGITGVKVDVIHSLEYVCDEYGGRVDLAKVYYEGLTKSIVKNFNGNGMIASMQHCNDFFFLGTKQISMGRVGDDFWFQDPNGDPMGSFWLQGVHMIHCSYNSLWMGQMIQPDWDMFQSDHVCAKFHAGSRAICGGPIYVSDNVGSHDFDLIKKLVFPDGTIPKCIYFPLPTRDCLFKNPLFDHTTVLKIWNFNKYGGVIGAFNCQGAGWDPIMQKFRGFPECYKPIPGTVHVTEVEWDQKEETSHLGKAEEYVVYLNQAEELSLMTLKSEPIQFTIQPSTFELYSFVPVTKLCGGIKFAPIGLTNMFNSGGTVIDLEYVGNGAKIKVKGGGSFLAYSSESPKKFQLNGCEVDFEWLGDGKLCVNVPWIEEACGVSDMEIFF.

Positions 1-11 are excised as a propeptide; the sequence is MAPPLNSTTSN.

Belongs to the glycosyl hydrolases 36 family.

It localises to the cytoplasm. It catalyses the reaction alpha-D-galactosyl-(1-&gt;3)-1D-myo-inositol + raffinose = stachyose + myo-inositol. Its pathway is glycan metabolism; stachyose biosynthesis; stachyose from raffinose: step 1/1. In terms of biological role, catalyzes stachyose synthesis by transfer of a galactosyl moiety from galactinol to raffinose. Also catalyzes verbascose synthesis by galactosyl transfer from galactinol to stachyose or from one stachyose molecule to another. Oligosaccharides of the raffinose family play a protective role in maturation drying of seeds. They may act as cryoprotectants in frost-hardy plants. This is Stachyose synthase (STS1) from Pisum sativum (Garden pea).